We begin with the raw amino-acid sequence, 184 residues long: Mediator of RNA polymerase II transcription subunit 28 (184 aa).

A coiled-coil region spans residues L77 to S105.

This sequence belongs to the Mediator complex subunit 28 family. As to quaternary structure, component of the Mediator complex.

It localises to the nucleus. Component of the Mediator complex, a coactivator involved in the regulated transcription of nearly all RNA polymerase II-dependent genes. Mediator functions as a bridge to convey information from gene-specific regulatory proteins to the basal RNA polymerase II transcription machinery. Mediator is recruited to promoters by direct interactions with regulatory proteins and serves as a scaffold for the assembly of a functional preinitiation complex with RNA polymerase II and the general transcription factors. The chain is Mediator of RNA polymerase II transcription subunit 28 (MED28) from Aedes aegypti (Yellowfever mosquito).